The following is a 601-amino-acid chain: Glutathione-regulated potassium-efflux system protein KefB (601 aa).

13 helical membrane passes run 4 to 24 (SDLLTAGVMFLFAAVAAVPLA), 29 to 49 (IGAVLGYLLAGIAIGPWGLGF), 55 to 75 (EILHFSELGVVFLMFIIGLEL), 87 to 107 (IFGVGAAQVMLSAVVLAGLLM), 115 to 135 (AAVIGGIGLAMSSTAMALQLM), 152 to 172 (VLLFQDLAVIPALALVPLLAG), 177 to 197 (HFDWIKVGMKVLAFAGMLIGG), 207 to 227 (FIADSGVREVFTAATLLLVLG), 230 to 250 (LFMDALGLSMALGTFIAGVLL), 262 to 282 (AIDPFKGLLLGLFFISVGMSL), 284 to 304 (LGVLYTHLLWVAVSVIVLVAV), 324 to 344 (MQFAGVLSQGGEFAFVLFSTA), and 356 to 376 (SLLLVTVTLSMMTTPLLMKLV). The RCK N-terminal domain maps to 400 to 519 (KPQVIVVGFG…AGVTQFSRET (120 aa)).

It belongs to the monovalent cation:proton antiporter 2 (CPA2) transporter (TC 2.A.37) family. KefB subfamily. As to quaternary structure, interacts with the regulatory subunit KefG.

The protein resides in the cell inner membrane. Functionally, pore-forming subunit of a potassium efflux system that confers protection against electrophiles. Catalyzes K(+)/H(+) antiport. The polypeptide is Glutathione-regulated potassium-efflux system protein KefB (Citrobacter koseri (strain ATCC BAA-895 / CDC 4225-83 / SGSC4696)).